Reading from the N-terminus, the 163-residue chain is Probable chemoreceptor glutamine deamidase CheD (163 aa).

Belongs to the CheD family.

The enzyme catalyses L-glutaminyl-[protein] + H2O = L-glutamyl-[protein] + NH4(+). Probably deamidates glutamine residues to glutamate on methyl-accepting chemotaxis receptors (MCPs), playing an important role in chemotaxis. This chain is Probable chemoreceptor glutamine deamidase CheD, found in Borrelia turicatae (strain 91E135).